Consider the following 149-residue polypeptide: Myoglobin (149 aa).

Ala2 carries the N-acetylalanine modification. Residues 2 to 143 (ABWDKVNSVW…ICSDIEKEYK (142 aa)) form the Globin domain. His89 is a heme b binding site.

It belongs to the globin family. Monomeric.

Its subcellular location is the cytoplasm. It localises to the sarcoplasm. The catalysed reaction is Fe(III)-heme b-[protein] + nitric oxide + H2O = Fe(II)-heme b-[protein] + nitrite + 2 H(+). The enzyme catalyses H2O2 + AH2 = A + 2 H2O. In terms of biological role, monomeric heme protein which primary function is to store oxygen and facilitate its diffusion within muscle tissues. Reversibly binds oxygen through a pentacoordinated heme iron and enables its timely and efficient release as needed during periods of heightened demand. Depending on the oxidative conditions of tissues and cells, and in addition to its ability to bind oxygen, it also has a nitrite reductase activity whereby it regulates the production of bioactive nitric oxide. Under stress conditions, like hypoxia and anoxia, it also protects cells against reactive oxygen species thanks to its pseudoperoxidase activity. The sequence is that of Myoglobin (mb) from Hemitriakis japanica (Japanese topeshark).